Consider the following 90-residue polypeptide: Small ribosomal subunit protein uS15 (90 aa).

It belongs to the universal ribosomal protein uS15 family. In terms of assembly, part of the 30S ribosomal subunit. Forms a bridge to the 50S subunit in the 70S ribosome, contacting the 23S rRNA.

In terms of biological role, one of the primary rRNA binding proteins, it binds directly to 16S rRNA where it helps nucleate assembly of the platform of the 30S subunit by binding and bridging several RNA helices of the 16S rRNA. Forms an intersubunit bridge (bridge B4) with the 23S rRNA of the 50S subunit in the ribosome. The polypeptide is Small ribosomal subunit protein uS15 (Herpetosiphon aurantiacus (strain ATCC 23779 / DSM 785 / 114-95)).